The sequence spans 396 residues: Carbamoyl phosphate synthase small chain (396 aa).

Positions 1–204 (MTQHDNDPAW…WDKGFGQQDK (204 aa)) are CPSase. L-glutamine is bound by residues Ser59, Gly256, and Gly258. Positions 208 to 396 (NVVAIDYGIK…AELMRQKKSA (189 aa)) constitute a Glutamine amidotransferase type-1 domain. Cys285 functions as the Nucleophile in the catalytic mechanism. Residues Leu286, Gln289, Asn327, Gly329, and Phe330 each coordinate L-glutamine. Residues His369 and Glu371 contribute to the active site.

This sequence belongs to the CarA family. In terms of assembly, composed of two chains; the small (or glutamine) chain promotes the hydrolysis of glutamine to ammonia, which is used by the large (or ammonia) chain to synthesize carbamoyl phosphate. Tetramer of heterodimers (alpha,beta)4.

It catalyses the reaction hydrogencarbonate + L-glutamine + 2 ATP + H2O = carbamoyl phosphate + L-glutamate + 2 ADP + phosphate + 2 H(+). The catalysed reaction is L-glutamine + H2O = L-glutamate + NH4(+). It participates in amino-acid biosynthesis; L-arginine biosynthesis; carbamoyl phosphate from bicarbonate: step 1/1. The protein operates within pyrimidine metabolism; UMP biosynthesis via de novo pathway; (S)-dihydroorotate from bicarbonate: step 1/3. In terms of biological role, small subunit of the glutamine-dependent carbamoyl phosphate synthetase (CPSase). CPSase catalyzes the formation of carbamoyl phosphate from the ammonia moiety of glutamine, carbonate, and phosphate donated by ATP, constituting the first step of 2 biosynthetic pathways, one leading to arginine and/or urea and the other to pyrimidine nucleotides. The small subunit (glutamine amidotransferase) binds and cleaves glutamine to supply the large subunit with the substrate ammonia. This chain is Carbamoyl phosphate synthase small chain, found in Bradyrhizobium diazoefficiens (strain JCM 10833 / BCRC 13528 / IAM 13628 / NBRC 14792 / USDA 110).